Consider the following 290-residue polypeptide: Ribosomal RNA small subunit methyltransferase A (290 aa).

Residues Asn27, Leu29, Gly54, Glu75, Asp100, and Asn125 each contribute to the S-adenosyl-L-methionine site.

The protein belongs to the class I-like SAM-binding methyltransferase superfamily. rRNA adenine N(6)-methyltransferase family. RsmA subfamily.

The protein resides in the cytoplasm. It catalyses the reaction adenosine(1518)/adenosine(1519) in 16S rRNA + 4 S-adenosyl-L-methionine = N(6)-dimethyladenosine(1518)/N(6)-dimethyladenosine(1519) in 16S rRNA + 4 S-adenosyl-L-homocysteine + 4 H(+). Specifically dimethylates two adjacent adenosines (A1518 and A1519) in the loop of a conserved hairpin near the 3'-end of 16S rRNA in the 30S particle. May play a critical role in biogenesis of 30S subunits. The polypeptide is Ribosomal RNA small subunit methyltransferase A (Streptococcus pyogenes serotype M18 (strain MGAS8232)).